We begin with the raw amino-acid sequence, 92 residues long: DNA-directed RNA polymerase subunit Rpo11 (92 aa).

Belongs to the archaeal Rpo11/eukaryotic RPB11/RPC19 RNA polymerase subunit family. In terms of assembly, part of the RNA polymerase complex.

It localises to the cytoplasm. It catalyses the reaction RNA(n) + a ribonucleoside 5'-triphosphate = RNA(n+1) + diphosphate. DNA-dependent RNA polymerase (RNAP) catalyzes the transcription of DNA into RNA using the four ribonucleoside triphosphates as substrates. This Methanosarcina barkeri (strain Fusaro / DSM 804) protein is DNA-directed RNA polymerase subunit Rpo11.